A 102-amino-acid polypeptide reads, in one-letter code: Aspartyl/glutamyl-tRNA(Asn/Gln) amidotransferase subunit C (102 aa).

The protein belongs to the GatC family. In terms of assembly, heterotrimer of A, B and C subunits.

The catalysed reaction is L-glutamyl-tRNA(Gln) + L-glutamine + ATP + H2O = L-glutaminyl-tRNA(Gln) + L-glutamate + ADP + phosphate + H(+). It catalyses the reaction L-aspartyl-tRNA(Asn) + L-glutamine + ATP + H2O = L-asparaginyl-tRNA(Asn) + L-glutamate + ADP + phosphate + 2 H(+). In terms of biological role, allows the formation of correctly charged Asn-tRNA(Asn) or Gln-tRNA(Gln) through the transamidation of misacylated Asp-tRNA(Asn) or Glu-tRNA(Gln) in organisms which lack either or both of asparaginyl-tRNA or glutaminyl-tRNA synthetases. The reaction takes place in the presence of glutamine and ATP through an activated phospho-Asp-tRNA(Asn) or phospho-Glu-tRNA(Gln). The polypeptide is Aspartyl/glutamyl-tRNA(Asn/Gln) amidotransferase subunit C (Bordetella bronchiseptica (strain ATCC BAA-588 / NCTC 13252 / RB50) (Alcaligenes bronchisepticus)).